A 367-amino-acid chain; its full sequence is MLQKLVIDKLEEIEKRFEEIEGLLAKEDVISDFNKYQSLLKERAKIEEIVDKFREYKRLLKEKEDLEEMVKEEQDEDLRSLAETELEDIQEKLEKVEFELKALLLPKDPNDEKNIIMEIRAGTGGEEAALFAADLFRMYLGYAQKKGWKVEIVSSNPTGLGGFKEIIFIVEGKGAYSRLKFESGVHRVQRVPITESSGRIHTSTATVAVLPEMEEIEVEIDPKDLRIETFRSGGAGGQHVNKTESGVRITHIPSGIVVQCQDERSQHQNREKAMKVLRARLYEYYQREKENEIASQRRQQVGTGERSEKIRTYNFPQRRVTDHRINYSSFQLEEVLSGELDEFIDRLILAEKEEQIKKLFEEVGATS.

Q238 is modified (N5-methylglutamine).

This sequence belongs to the prokaryotic/mitochondrial release factor family. In terms of processing, methylated by PrmC. Methylation increases the termination efficiency of RF1.

It is found in the cytoplasm. Its function is as follows. Peptide chain release factor 1 directs the termination of translation in response to the peptide chain termination codons UAG and UAA. In Dictyoglomus turgidum (strain DSM 6724 / Z-1310), this protein is Peptide chain release factor 1.